A 100-amino-acid polypeptide reads, in one-letter code: UPF0473 protein LMHCC_1068 (100 aa).

It belongs to the UPF0473 family.

This Listeria monocytogenes serotype 4a (strain HCC23) protein is UPF0473 protein LMHCC_1068.